The sequence spans 591 residues: Aspartate--tRNA(Asp/Asn) ligase (591 aa).

Position 174 (Glu174) interacts with L-aspartate. Residues 198–201 (QLFK) are aspartate. Position 220 (Arg220) interacts with L-aspartate. ATP-binding positions include 220-222 (RDE) and Gln229. Position 450 (His450) interacts with L-aspartate. Residue Glu483 participates in ATP binding. Arg490 is a binding site for L-aspartate. ATP is bound at residue 535–538 (GLDR).

Belongs to the class-II aminoacyl-tRNA synthetase family. Type 1 subfamily. In terms of assembly, homodimer.

It is found in the cytoplasm. The catalysed reaction is tRNA(Asx) + L-aspartate + ATP = L-aspartyl-tRNA(Asx) + AMP + diphosphate. Aspartyl-tRNA synthetase with relaxed tRNA specificity since it is able to aspartylate not only its cognate tRNA(Asp) but also tRNA(Asn). Reaction proceeds in two steps: L-aspartate is first activated by ATP to form Asp-AMP and then transferred to the acceptor end of tRNA(Asp/Asn). This Pseudomonas fluorescens (strain Pf0-1) protein is Aspartate--tRNA(Asp/Asn) ligase.